The chain runs to 323 residues: Methenyltetrahydromethanopterin cyclohydrolase (323 aa).

Belongs to the MCH family.

The protein resides in the cytoplasm. It catalyses the reaction 5,10-methenyl-5,6,7,8-tetrahydromethanopterin + H2O = N(5)-formyl-5,6,7,8-tetrahydromethanopterin + H(+). It participates in one-carbon metabolism; methanogenesis from CO(2); 5,10-methenyl-5,6,7,8-tetrahydromethanopterin from CO(2): step 3/3. In terms of biological role, catalyzes the reversible interconversion of 5-formyl-H(4)MPT to methenyl-H(4)MPT(+). The sequence is that of Methenyltetrahydromethanopterin cyclohydrolase from Methanococcus vannielii (strain ATCC 35089 / DSM 1224 / JCM 13029 / OCM 148 / SB).